The sequence spans 207 residues: Guanylate kinase (207 aa).

One can recognise a Guanylate kinase-like domain in the interval 3–181; the sequence is GQLFVICGPS…AVEMVVSIVR (179 aa). Residue 10 to 17 coordinates ATP; it reads GPSGAGKT.

Belongs to the guanylate kinase family.

The protein resides in the cytoplasm. It catalyses the reaction GMP + ATP = GDP + ADP. Functionally, essential for recycling GMP and indirectly, cGMP. The polypeptide is Guanylate kinase (gmk) (Thermotoga maritima (strain ATCC 43589 / DSM 3109 / JCM 10099 / NBRC 100826 / MSB8)).